Reading from the N-terminus, the 168-residue chain is uncharacterized protein (168 aa).

Positions 1–15 are enriched in basic and acidic residues; the sequence is MKEASDREEAPKMVE. The disordered stretch occupies residues 1–36; it reads MKEASDREEAPKMVEKNYSTGFRKAHGEKDQSVTKP.

The protein localises to the cytoplasm. This is an uncharacterized protein from Saccharomyces cerevisiae (strain ATCC 204508 / S288c) (Baker's yeast).